The chain runs to 149 residues: MQIILLDKVANLGSLGDQVNVKSGYARNYLIPQGKAVSATKKNIEFFEARRAELEAKLAETLAAAEARAAKITALGSVTISSKAGDEGKLFGSIGTRDIADAVTAAGVEICKSEVRLPNGVLRTTGDHEVHFQVHSDVFAELNVIIVAE.

Belongs to the bacterial ribosomal protein bL9 family.

Functionally, binds to the 23S rRNA. The protein is Large ribosomal subunit protein bL9 of Proteus mirabilis (strain HI4320).